The sequence spans 936 residues: Protein SIEL (936 aa).

As to quaternary structure, interacts with SHR, MGP, SCR, JKD, CPC, TMO7 and AGL21, but not with LFY or STM.

The protein resides in the nucleus. It localises to the endosome. Its subcellular location is the cytoplasm. It is found in the cell cortex. Its function is as follows. Intracellular shuttle that promotes movement of SHR from the stele into the endodermis. Required for SHR association to endosomes and localization, and for intercellular movement of SHR. In Arabidopsis thaliana (Mouse-ear cress), this protein is Protein SIEL.